Reading from the N-terminus, the 160-residue chain is uncharacterized protein (160 aa).

The chain crosses the membrane as a helical span at residues 47 to 67; it reads LLGGFANVAAILTPLVAVLAY.

The protein localises to the membrane. This is an uncharacterized protein from Sinorhizobium fredii (strain NBRC 101917 / NGR234).